We begin with the raw amino-acid sequence, 320 residues long: Ribosomal RNA large subunit methyltransferase F (320 aa).

A disordered region spans residues 1–20 (MHKSANSKTRKQSKGLHPRN).

It belongs to the methyltransferase superfamily. METTL16/RlmF family.

It is found in the cytoplasm. The catalysed reaction is adenosine(1618) in 23S rRNA + S-adenosyl-L-methionine = N(6)-methyladenosine(1618) in 23S rRNA + S-adenosyl-L-homocysteine + H(+). Its function is as follows. Specifically methylates the adenine in position 1618 of 23S rRNA. This chain is Ribosomal RNA large subunit methyltransferase F, found in Saccharophagus degradans (strain 2-40 / ATCC 43961 / DSM 17024).